A 230-amino-acid polypeptide reads, in one-letter code: Preflagellin peptidase (230 aa).

A topological domain (cytoplasmic) is located at residue methionine 1. Residues 2–18 (IEYIIGALGLIIASVQD) form a helical membrane-spanning segment. Topologically, residues 19-23 (FRSRE) are extracellular. A helical transmembrane segment spans residues 24-46 (IEDYIWIFLAVFGVLFAIYSSIT). At 47 to 49 (LLD) the chain is on the cytoplasmic side. A helical transmembrane segment spans residues 50–72 (YSILINSISGFVICFILGYMMFL). Residues 73 to 78 (SGIGGG) are Extracellular-facing. The chain crosses the membrane as a helical span at residues 79–89 (DGKMLIGLGAL). The Cytoplasmic segment spans residues 90 to 110 (VPKFQMPIYTSLGTLLNLNYV). The chain crosses the membrane as a helical span at residues 111–139 (PTFPIMVFINGIFFMVFLPFVILFRNILN). The Extracellular portion of the chain corresponds to 140 to 204 (GARPKTGKEF…EEIWVTPQIP (65 aa)). Residues 205–216 (LIIPITLSYLVT) traverse the membrane as a helical segment. Residues 217–230 (PIIGDRILDFLIPF) lie on the Cytoplasmic side of the membrane.

It belongs to the peptidase A24 family. Archaeal preflagellin peptidase subfamily.

The protein localises to the cell membrane. It carries out the reaction Cleaves the signal peptide of 3 to 12 amino acids from the N-terminal of preflagellin, usually at Arg-Gly-|- or Lys-Gly-|-, to release flagellin.. In terms of biological role, cleaves the N-terminal leader peptide from preflagellins. This is Preflagellin peptidase (flaK) from Methanococcus maripaludis (strain C6 / ATCC BAA-1332).